The primary structure comprises 216 residues: Kynurenine formamidase (216 aa).

Tryptophan 25 provides a ligand contact to substrate. Residues histidine 55, histidine 59, and aspartate 61 each contribute to the Zn(2+) site. Catalysis depends on histidine 65, which acts as the Proton donor/acceptor. 2 residues coordinate Zn(2+): histidine 167 and glutamate 179.

This sequence belongs to the Cyclase 1 superfamily. KynB family. Homodimer. It depends on Zn(2+) as a cofactor.

It carries out the reaction N-formyl-L-kynurenine + H2O = L-kynurenine + formate + H(+). The protein operates within amino-acid degradation; L-tryptophan degradation via kynurenine pathway; L-kynurenine from L-tryptophan: step 2/2. Functionally, catalyzes the hydrolysis of N-formyl-L-kynurenine to L-kynurenine, the second step in the kynurenine pathway of tryptophan degradation. This chain is Kynurenine formamidase, found in Cupriavidus taiwanensis (strain DSM 17343 / BCRC 17206 / CCUG 44338 / CIP 107171 / LMG 19424 / R1) (Ralstonia taiwanensis (strain LMG 19424)).